A 347-amino-acid polypeptide reads, in one-letter code: Methionine import ATP-binding protein MetN (347 aa).

In terms of domain architecture, ABC transporter spans 2–247 (ITTTGLTKVY…PGSELASALF (246 aa)). 38–45 (GQSGAGKS) contributes to the ATP binding site.

The protein belongs to the ABC transporter superfamily. Methionine importer (TC 3.A.1.24) family. As to quaternary structure, the complex is composed of two ATP-binding proteins (MetN), two transmembrane proteins (MetI) and a solute-binding protein (MetQ).

It localises to the cell membrane. It catalyses the reaction L-methionine(out) + ATP + H2O = L-methionine(in) + ADP + phosphate + H(+). The catalysed reaction is D-methionine(out) + ATP + H2O = D-methionine(in) + ADP + phosphate + H(+). In terms of biological role, part of the ABC transporter complex MetNIQ involved in methionine import. Responsible for energy coupling to the transport system. The polypeptide is Methionine import ATP-binding protein MetN (Streptomyces avermitilis (strain ATCC 31267 / DSM 46492 / JCM 5070 / NBRC 14893 / NCIMB 12804 / NRRL 8165 / MA-4680)).